Consider the following 194-residue polypeptide: Probable RNA 2'-phosphotransferase (194 aa).

The protein belongs to the KptA/TPT1 family.

Removes the 2'-phosphate from RNA via an intermediate in which the phosphate is ADP-ribosylated by NAD followed by a presumed transesterification to release the RNA and generate ADP-ribose 1''-2''-cyclic phosphate (APPR&gt;P). May function as an ADP-ribosylase. This chain is Probable RNA 2'-phosphotransferase, found in Escherichia coli O45:K1 (strain S88 / ExPEC).